The primary structure comprises 220 residues: Ribose-5-phosphate isomerase A (220 aa).

Substrate is bound by residues 29 to 32 (TGST), 82 to 85 (DGCD), and 95 to 98 (KGGG). Glu-104 (proton acceptor) is an active-site residue. Residue Lys-122 coordinates substrate.

Belongs to the ribose 5-phosphate isomerase family. As to quaternary structure, homodimer.

It carries out the reaction aldehydo-D-ribose 5-phosphate = D-ribulose 5-phosphate. It participates in carbohydrate degradation; pentose phosphate pathway; D-ribose 5-phosphate from D-ribulose 5-phosphate (non-oxidative stage): step 1/1. Functionally, catalyzes the reversible conversion of ribose-5-phosphate to ribulose 5-phosphate. The protein is Ribose-5-phosphate isomerase A of Laribacter hongkongensis (strain HLHK9).